A 78-amino-acid polypeptide reads, in one-letter code: Esculentin-2Vb (78 aa).

An N-terminal signal peptide occupies residues 1 to 22 (MFTMKKSLLLLFFLGTISLSLC). Positions 23 to 39 (EEERGADEEEGDGEKLM) are excised as a propeptide. The cysteines at positions 72 and 78 are disulfide-linked.

Expressed by the skin glands.

It localises to the secreted. Antimicrobial peptide. The polypeptide is Esculentin-2Vb (Odorrana versabilis (Chinese bamboo leaf odorous frog)).